Consider the following 444-residue polypeptide: CCA-adding enzyme (444 aa).

Residues S57 and R60 each contribute to the ATP site. 2 residues coordinate CTP: S57 and R60. Mg(2+)-binding residues include D69, D71, and D124. ATP-binding residues include H147, K168, and Y177. Positions 147, 168, and 177 each coordinate CTP.

It belongs to the tRNA nucleotidyltransferase/poly(A) polymerase family. Archaeal CCA-adding enzyme subfamily. Homodimer. It depends on Mg(2+) as a cofactor.

The catalysed reaction is a tRNA precursor + 2 CTP + ATP = a tRNA with a 3' CCA end + 3 diphosphate. The enzyme catalyses a tRNA with a 3' CCA end + 2 CTP + ATP = a tRNA with a 3' CCACCA end + 3 diphosphate. Its function is as follows. Catalyzes the addition and repair of the essential 3'-terminal CCA sequence in tRNAs without using a nucleic acid template. Adds these three nucleotides in the order of C, C, and A to the tRNA nucleotide-73, using CTP and ATP as substrates and producing inorganic pyrophosphate. tRNA 3'-terminal CCA addition is required both for tRNA processing and repair. Also involved in tRNA surveillance by mediating tandem CCA addition to generate a CCACCA at the 3' terminus of unstable tRNAs. While stable tRNAs receive only 3'-terminal CCA, unstable tRNAs are marked with CCACCA and rapidly degraded. This is CCA-adding enzyme from Methanococcus maripaludis (strain DSM 14266 / JCM 13030 / NBRC 101832 / S2 / LL).